Reading from the N-terminus, the 136-residue chain is Cyclase aurE (136 aa).

Belongs to the aurE cyclase family.

Its pathway is polyketide biosynthesis. Its function is as follows. Cyclase; part of the gene cluster that mediates the biosynthesis of aurovertins, fungal polyketides that exhibit potent inhibition of adenosine triphosphate synthase. Tha biosynthesis starts with the HR-PKS aurA that selects propionate as the starter unit; synthesizes a hexa-ene chain through the repeated functions of the KR and DH domains in the first six iterations; selectively introduces three alpha-methyl substitutions at C4, C6, and C16 using the S-adensylmethionine-dependent cMET; and shuts off KR and DH in the last three iterations to afford a 1,3,5-triketo portion that can undergo intramolecular cyclization to yield the alpha-pyrone intermediate. AurE may act as a cyclase and enhances the rate of pyrone formation and product release of aurA. The methyltransferase aurB then methylates the C17 hydroxyl group. C17 methylation is required to initiate epoxidation by the downstream monooxygenase aurC. The monooxygenase aurC and the epoxide hydrolase aurD can iteratively transform the terminal triene portion of the methylated precursor into the dioxabicyclo[3.2.1]octane scaffold of aurovertin E. Epoxidation modifications of the precursor occur in two separate steps; bis-epoxidation of the two terminal olefins takes place first, followed by another epoxidation that occurs at C7-C8 after tetrahydrofuran formation. The O-acyltransferase aurG converts aurovertin E to aurovertin A. This chain is Cyclase aurE, found in Calcarisporium arbuscula (Dendryphion arbuscula).